Reading from the N-terminus, the 757-residue chain is Maltose phosphorylase (757 aa).

Position 354-355 (354-355 (WD)) interacts with substrate. E483 (proton donor) is an active-site residue. 588–589 (KQ) is a binding site for substrate.

This sequence belongs to the glycosyl hydrolase 65 family.

It carries out the reaction D-maltose + phosphate = beta-D-glucose 1-phosphate + D-glucose. The protein operates within glycan degradation; maltose degradation. Its function is as follows. Catalyzes the phosphorolysis of maltose, leading to the formation of glucose and glucose 1-P. This Bacillus subtilis (strain 168) protein is Maltose phosphorylase (mdxK).